The primary structure comprises 357 residues: 4-hydroxymandelate oxidase (357 aa).

One can recognise an FMN hydroxy acid dehydrogenase domain in the interval 1 to 357; sequence MTYVSLADLE…RRLNTKLGVV (357 aa). Glutamine 126 provides a ligand contact to FMN. An a 2-oxocarboxylate-binding site is contributed by tyrosine 128. Threonine 154 is a binding site for FMN. Arginine 163 provides a ligand contact to a 2-oxocarboxylate. Lysine 228 contributes to the FMN binding site. Histidine 252 functions as the Proton acceptor in the catalytic mechanism. Residue arginine 255 participates in a 2-oxocarboxylate binding. Residues 283 to 287 and 306 to 307 each bind FMN; these read DGGIR and GR.

Belongs to the FMN-dependent alpha-hydroxy acid dehydrogenase family. FMN is required as a cofactor.

The catalysed reaction is (S)-4-hydroxymandelate + O2 = 4-hydroxyphenylglyoxylate + H2O2. The protein operates within antibiotic biosynthesis; vancomycin biosynthesis. Its function is as follows. Catalyzes the oxidation of p-hydroxymandelate to p-hydroxybenzoylformate in the biosynthesis of L-(4-hydroxyphenyl)glycine and L-(3,5-dihydroxyphenyl)glycine, 2 non-proteinogenic amino acids occurring in the vancomycin group of antibiotics. The chain is 4-hydroxymandelate oxidase (hmo) from Amycolatopsis orientalis (Nocardia orientalis).